We begin with the raw amino-acid sequence, 163 residues long: ATP synthase subunit b 1 (163 aa).

A helical membrane pass occupies residues 5-25; sequence FDATFFAFVGLVLFLALVVYL.

The protein belongs to the ATPase B chain family. In terms of assembly, F-type ATPases have 2 components, F(1) - the catalytic core - and F(0) - the membrane proton channel. F(1) has five subunits: alpha(3), beta(3), gamma(1), delta(1), epsilon(1). F(0) has three main subunits: a(1), b(2) and c(10-14). The alpha and beta chains form an alternating ring which encloses part of the gamma chain. F(1) is attached to F(0) by a central stalk formed by the gamma and epsilon chains, while a peripheral stalk is formed by the delta and b chains.

Its subcellular location is the cell inner membrane. Functionally, f(1)F(0) ATP synthase produces ATP from ADP in the presence of a proton or sodium gradient. F-type ATPases consist of two structural domains, F(1) containing the extramembraneous catalytic core and F(0) containing the membrane proton channel, linked together by a central stalk and a peripheral stalk. During catalysis, ATP synthesis in the catalytic domain of F(1) is coupled via a rotary mechanism of the central stalk subunits to proton translocation. In terms of biological role, component of the F(0) channel, it forms part of the peripheral stalk, linking F(1) to F(0). This Rhizobium leguminosarum bv. trifolii (strain WSM2304) protein is ATP synthase subunit b 1.